The chain runs to 260 residues: MGRVIRAQRKGAGSVFKSHTHHRKGPARFRTLDFGERNGYLKGVITEVIHDPGRGAPLARVTFRHPFRYKHQKELFVAAEGMYTGQFVYCGKKATLMVGNVLPLRSIPEGAVVCNVEHKVGDRGVFARCSGDYAIVISHNPDNGTTRVKLPSGAKKIVPSGCRAMIGQVAGGGRTEKPMLKAGNAYHKYRVKRNCWPKVRGVAMNPVEHPHGGGNHQHIGHASTVRRDAPPGQKVGLIAARRTGRLRGQARATAAKADKA.

Residues 1–24 form a disordered region; that stretch reads MGRVIRAQRKGAGSVFKSHTHHRK.

Belongs to the universal ribosomal protein uL2 family.

It is found in the cytoplasm. The protein is Large ribosomal subunit protein uL2 (RPL8) of Solanum lycopersicum (Tomato).